An 843-amino-acid polypeptide reads, in one-letter code: Probable inorganic carbon transporter subunit DabA 2 (843 aa).

Zn(2+)-binding residues include Cys-352, Asp-354, His-536, and Cys-551.

This sequence belongs to the inorganic carbon transporter (TC 9.A.2) DabA family. In terms of assembly, forms a complex with DabB. It depends on Zn(2+) as a cofactor.

Its subcellular location is the cell inner membrane. Part of an energy-coupled inorganic carbon pump. The polypeptide is Probable inorganic carbon transporter subunit DabA 2 (Bradyrhizobium sp. (strain BTAi1 / ATCC BAA-1182)).